Reading from the N-terminus, the 456-residue chain is Probable hexose phosphate transport protein (456 aa).

11 helical membrane passes run 34–54 (IFYS…SFTF), 70–90 (LGII…VSGV), 113–133 (IFFG…INGW), 161–181 (VWST…GVAI), 185–205 (GWRG…FILI), 257–277 (YVLS…IYVV), 302–322 (LCVS…GWLS), 331–351 (GPMN…LWGT), 363–383 (FLFI…LAAA), 394–414 (ASGF…YPLG), and 421–441 (GWHG…ILFL).

It belongs to the major facilitator superfamily. Organophosphate:Pi antiporter (OPA) (TC 2.A.1.4) family.

It localises to the cell membrane. Functionally, transport protein for sugar phosphate uptake. The sequence is that of Probable hexose phosphate transport protein from Chlamydia trachomatis serovar D (strain ATCC VR-885 / DSM 19411 / UW-3/Cx).